The chain runs to 394 residues: MKNCVIVSAVRTAIGSFNGSLASTSAIDLGATVIKAAIERAKIDSQHVDEVIMGNVLQAGLGQNPARQALLKSGLAETVCGFTVNKVCGSGLKSVALAAQAIQAGQAQSIVAGGMENMSLAPYLLDAKARSGYRLGDGQVYDVILRDGLMCATHGYHMGITAENVAKEYGITREMQDELALHSQRKAAAAIESGAFTAEIVPVNVVTRKKTFVFSQDEFPKANSTAEALGALRPAFDKAGTVTAGNASGINDGAAALVIMEESAALAAGLTPLARIKSYASGGVPPALMGMGPVPATQKALQLAGLQLADIDLIEANEAFAAQFLAVGKNLGFDSEKVNVNGGAIALGHPIGASGARILVTLLHAMQARDKTLGLATLCIGGGQGIAMVIERLN.

Cys-88 (acyl-thioester intermediate) is an active-site residue. Residues His-349 and Cys-379 each act as proton acceptor in the active site.

The protein belongs to the thiolase-like superfamily. Thiolase family.

It is found in the cytoplasm. It carries out the reaction 2 acetyl-CoA = acetoacetyl-CoA + CoA. It participates in metabolic intermediate biosynthesis; (R)-mevalonate biosynthesis; (R)-mevalonate from acetyl-CoA: step 1/3. The sequence is that of Acetyl-CoA acetyltransferase (atoB) from Escherichia coli (strain K12).